The following is a 300-amino-acid chain: uncharacterized protein (300 aa).

Positions 1–20 (MRLLISCILILSILVNFISG) are cleaved as a signal peptide. Residues 21–279 (HAVLVAPTPF…PCSIYGDGNG (259 aa)) lie on the Extracellular side of the membrane. 3 N-linked (GlcNAc...) asparagine glycosylation sites follow: N56, N217, and N278. A helical membrane pass occupies residues 280-300 (SNLIIIPTLLIISILSLILMF).

It is found in the membrane. This is an uncharacterized protein from Dictyostelium discoideum (Social amoeba).